The primary structure comprises 226 residues: 2-C-methyl-D-erythritol 4-phosphate cytidylyltransferase (226 aa).

The protein belongs to the IspD/TarI cytidylyltransferase family. IspD subfamily.

It carries out the reaction 2-C-methyl-D-erythritol 4-phosphate + CTP + H(+) = 4-CDP-2-C-methyl-D-erythritol + diphosphate. It participates in isoprenoid biosynthesis; isopentenyl diphosphate biosynthesis via DXP pathway; isopentenyl diphosphate from 1-deoxy-D-xylulose 5-phosphate: step 2/6. Functionally, catalyzes the formation of 4-diphosphocytidyl-2-C-methyl-D-erythritol from CTP and 2-C-methyl-D-erythritol 4-phosphate (MEP). The sequence is that of 2-C-methyl-D-erythritol 4-phosphate cytidylyltransferase from Synechococcus sp. (strain CC9902).